A 207-amino-acid chain; its full sequence is MPMRKRHFYRLLPLASLLLAACTIPVSKGPATSPTSPQWRQHEQQLQQLGQFETRGAFAYLSDKQKVYARFFWQQTSPERYRLLLTNPLGSTELELVVQPGVTQLTDNQGKRYVSDDPQEMIQKLTGMSIPLESLRQWILGLPGDTPNFTLDDKYRLKKLTYQQNGVTWVVDYQEYNTQVTPPLPSRLELNQDGQRIKLKMDSWTIK.

Positions 1–21 are cleaved as a signal peptide; that stretch reads MPMRKRHFYRLLPLASLLLAA. The N-palmitoyl cysteine moiety is linked to residue Cys-22. The S-diacylglycerol cysteine moiety is linked to residue Cys-22.

It belongs to the LolB family. Monomer.

It is found in the cell outer membrane. Functionally, plays a critical role in the incorporation of lipoproteins in the outer membrane after they are released by the LolA protein. The protein is Outer-membrane lipoprotein LolB of Yersinia pseudotuberculosis serotype IB (strain PB1/+).